A 337-amino-acid polypeptide reads, in one-letter code: Phytanoyl-CoA dioxygenase, peroxisomal (337 aa).

The transit peptide at 1–30 directs the protein to the peroxisome; it reads MDRNRASARLTVLLRHLGCRSAGTIIAHHT. 2 positions are modified to N6-succinyllysine: lysine 59 and lysine 108. 2-oxoglutarate-binding positions include lysine 120, methionine 157, 175 to 177, and tryptophan 193; that span reads HQD. Fe cation-binding residues include histidine 175 and aspartate 177. The residue at position 252 (lysine 252) is an N6-succinyllysine. Histidine 264 lines the Fe cation pocket. 2-oxoglutarate-binding residues include serine 266 and arginine 275.

The protein belongs to the PhyH family. As to quaternary structure, interacts with FKBP52 and PHYHIP. Fe cation serves as cofactor. It depends on L-ascorbate as a cofactor. The cofactor is ATP. Requires Mg(2+) as cofactor.

It localises to the peroxisome. The enzyme catalyses phytanoyl-CoA + 2-oxoglutarate + O2 = 2-hydroxyphytanoyl-CoA + succinate + CO2. It carries out the reaction 3-methylhexadecanoyl-CoA + 2-oxoglutarate + O2 = 2-hydroxy-3-methylhexadecanoyl-CoA + succinate + CO2. It catalyses the reaction hexadecanoyl-CoA + 2-oxoglutarate + O2 = 2-hydroxyhexadecanoyl-CoA + succinate + CO2. The catalysed reaction is octanoyl-CoA + 2-oxoglutarate + O2 = 2-hydroxyoctanoyl-CoA + succinate + CO2. The enzyme catalyses decanoyl-CoA + 2-oxoglutarate + O2 = 2-hydroxydecanoyl-CoA + succinate + CO2. It carries out the reaction 3-methylbutanoyl-CoA + 2-oxoglutarate + O2 = 2-hydroxy-3-methylbutanoyl-CoA + succinate + CO2. It catalyses the reaction heptadecanoyl-CoA + 2-oxoglutarate + O2 = 2-hydroxyheptadecanoyl-CoA + succinate + CO2. The catalysed reaction is eicosanoyl-CoA + 2-oxoglutarate + O2 = 2-hydroxyeicosanoyl-CoA + succinate + CO2. The enzyme catalyses octadecanoyl-CoA + 2-oxoglutarate + O2 = 2-hydroxyoctadecanoyl-CoA + succinate + CO2. It carries out the reaction dodecanoyl-CoA + 2-oxoglutarate + O2 = 2-hydroxydodecanoyl-CoA + succinate + CO2. It catalyses the reaction tetradecanoyl-CoA + 2-oxoglutarate + O2 = 2-hydroxytetradecanoyl-CoA + succinate + CO2. The catalysed reaction is hexanoyl-CoA + 2-oxoglutarate + O2 = 2-hydroxyhexanoyl-CoA + succinate + CO2. The enzyme catalyses butanoyl-CoA + 2-oxoglutarate + O2 = 2-hydroxybutanoyl-CoA + succinate + CO2. It carries out the reaction 3-methylnonanoyl-CoA + 2-oxoglutarate + O2 = 2-hydroxy-3-methylnonanoyl-CoA + succinate + CO2. It catalyses the reaction 3-methylundecanoyl-CoA + 2-oxoglutarate + O2 = 2-hydroxy-3-methylundecanoyl-CoA + succinate + CO2. The catalysed reaction is 3-methyldodecanoyl-CoA + 2-oxoglutarate + O2 = 2-hydroxy-3-methyldodecanoyl-CoA + succinate + CO2. The protein operates within lipid metabolism; fatty acid metabolism. In terms of biological role, catalyzes the 2-hydroxylation of not only racemic phytanoyl-CoA and the isomers of 3-methylhexadecanoyl-CoA, but also a variety of other mono- branched 3-methylacyl-CoA esters (with a chain length of at least seven carbon atoms) and straight-chain acyl-CoA esters (with a chain length longer than four carbon atoms). Does not hydroxylate long and very long straight chain acyl-CoAs or 2-methyl-and 4-methyl-branched acyl-CoAs. This Bos taurus (Bovine) protein is Phytanoyl-CoA dioxygenase, peroxisomal (PHYH).